The sequence spans 301 residues: GTPase Era (301 aa).

Residues 7–175 (YCGFIAIVGR…AAIVRKHLPE (169 aa)) enclose the Era-type G domain. The interval 15–22 (GRPNVGKS) is G1. 15 to 22 (GRPNVGKS) lines the GTP pocket. The segment at 41 to 45 (QTTRH) is G2. The segment at 62-65 (DTPG) is G3. GTP-binding positions include 62–66 (DTPGL) and 124–127 (NKVD). The tract at residues 124 to 127 (NKVD) is G4. A G5 region spans residues 154–156 (ISA). Residues 206–283 (LGAELPYSVT…HLELWVKVKS (78 aa)) form the KH type-2 domain.

Belongs to the TRAFAC class TrmE-Era-EngA-EngB-Septin-like GTPase superfamily. Era GTPase family. Monomer.

The protein resides in the cytoplasm. The protein localises to the cell inner membrane. Functionally, an essential GTPase that binds both GDP and GTP, with rapid nucleotide exchange. Plays a role in 16S rRNA processing and 30S ribosomal subunit biogenesis and possibly also in cell cycle regulation and energy metabolism. This is GTPase Era from Cronobacter sakazakii (strain ATCC BAA-894) (Enterobacter sakazakii).